A 365-amino-acid chain; its full sequence is Eukaryotic translation initiation factor 3 subunit H (365 aa).

The MPN domain maps to 11 to 160 (VKVEALVVMK…LRAFRLSPKF (150 aa)).

The protein belongs to the eIF-3 subunit H family. As to quaternary structure, component of the eukaryotic translation initiation factor 3 (eIF-3) complex.

It localises to the cytoplasm. Its function is as follows. Component of the eukaryotic translation initiation factor 3 (eIF-3) complex, which is involved in protein synthesis of a specialized repertoire of mRNAs and, together with other initiation factors, stimulates binding of mRNA and methionyl-tRNAi to the 40S ribosome. The eIF-3 complex specifically targets and initiates translation of a subset of mRNAs involved in cell proliferation. This Aspergillus niger (strain ATCC MYA-4892 / CBS 513.88 / FGSC A1513) protein is Eukaryotic translation initiation factor 3 subunit H.